The chain runs to 270 residues: Ribosomal RNA small subunit methyltransferase A (270 aa).

S-adenosyl-L-methionine-binding residues include histidine 11, leucine 13, glycine 38, glutamate 59, aspartate 84, and asparagine 109.

It belongs to the class I-like SAM-binding methyltransferase superfamily. rRNA adenine N(6)-methyltransferase family. RsmA subfamily.

It localises to the cytoplasm. It carries out the reaction adenosine(1518)/adenosine(1519) in 16S rRNA + 4 S-adenosyl-L-methionine = N(6)-dimethyladenosine(1518)/N(6)-dimethyladenosine(1519) in 16S rRNA + 4 S-adenosyl-L-homocysteine + 4 H(+). In terms of biological role, specifically dimethylates two adjacent adenosines (A1518 and A1519) in the loop of a conserved hairpin near the 3'-end of 16S rRNA in the 30S particle. May play a critical role in biogenesis of 30S subunits. This Crocosphaera subtropica (strain ATCC 51142 / BH68) (Cyanothece sp. (strain ATCC 51142)) protein is Ribosomal RNA small subunit methyltransferase A.